The following is a 240-amino-acid chain: Transposase for insertion sequence element IS3411 (240 aa).

Residues 125 to 240 (VAERPDQLWV…RASMVFTKRR (116 aa)) enclose the Integrase catalytic domain.

Functionally, involved in the transposition of the insertion sequence. This Escherichia coli protein is Transposase for insertion sequence element IS3411.